Here is a 223-residue protein sequence, read N- to C-terminus: Flagellar L-ring protein 2 (223 aa).

An N-terminal signal peptide occupies residues 1–17 (MKWLSKSWAVAVVLLVG). Cysteine 18 carries N-palmitoyl cysteine lipidation. A lipid anchor (S-diacylglycerol cysteine) is attached at cysteine 18.

Belongs to the FlgH family. In terms of assembly, the basal body constitutes a major portion of the flagellar organelle and consists of four rings (L,P,S, and M) mounted on a central rod.

The protein resides in the cell outer membrane. It is found in the bacterial flagellum basal body. Assembles around the rod to form the L-ring and probably protects the motor/basal body from shearing forces during rotation. In Vibrio parahaemolyticus serotype O3:K6 (strain RIMD 2210633), this protein is Flagellar L-ring protein 2.